The sequence spans 255 residues: Tritrans,polycis-undecaprenyl-diphosphate synthase (geranylgeranyl-diphosphate specific) (255 aa).

The active site involves Asp34. Asp34 contacts Mg(2+). Substrate is bound by residues 35-38 (GNRR), His51, and 79-81 (STE). The active-site Proton acceptor is the Asn82. Residues Phe83, Arg85, Arg204, and 210 to 212 (RIS) contribute to the substrate site. Glu223 contacts Mg(2+).

Belongs to the UPP synthase family. As to quaternary structure, homodimer. Mg(2+) is required as a cofactor.

The catalysed reaction is geranylgeranyl diphosphate + 7 isopentenyl diphosphate = tri-trans,hepta-cis-undecaprenyl diphosphate + 7 diphosphate. Its function is as follows. Catalyzes the sequential condensation of isopentenyl diphosphate (IPP) with geranylgeranyl diphosphate (GGPP) to yield (2Z,6Z,10Z,14Z,18Z,22Z,26Z,30E,34E,38E)-undecaprenyl diphosphate (tritrans,heptacis-UPP). It is probably the precursor of glycosyl carrier lipids. The chain is Tritrans,polycis-undecaprenyl-diphosphate synthase (geranylgeranyl-diphosphate specific) from Picrophilus torridus (strain ATCC 700027 / DSM 9790 / JCM 10055 / NBRC 100828 / KAW 2/3).